The primary structure comprises 447 residues: Argininosuccinate synthase (447 aa).

Residues 17-25 (AFSGGLDTS) and A43 contribute to the ATP site. Position 99 (Y99) interacts with L-citrulline. Positions 129 and 131 each coordinate ATP. Residues T131, N135, and D136 each contribute to the L-aspartate site. An L-citrulline-binding site is contributed by N135. D136 contacts ATP. L-citrulline contacts are provided by R139 and S192. Position 194 (D194) interacts with ATP. L-citrulline contacts are provided by T201, E203, and E280.

The protein belongs to the argininosuccinate synthase family. Type 2 subfamily. In terms of assembly, homotetramer.

The protein localises to the cytoplasm. It carries out the reaction L-citrulline + L-aspartate + ATP = 2-(N(omega)-L-arginino)succinate + AMP + diphosphate + H(+). Its pathway is amino-acid biosynthesis; L-arginine biosynthesis; L-arginine from L-ornithine and carbamoyl phosphate: step 2/3. This chain is Argininosuccinate synthase, found in Salmonella schwarzengrund (strain CVM19633).